Consider the following 1264-residue polypeptide: Phosphatidylinositol 3,4,5-trisphosphate 5-phosphatase 2 (1264 aa).

The SH2 domain occupies 26 to 122 (WYHRDLSRAA…GLVCALLLPV (97 aa)). Over residues 124 to 137 (REREPDPPDDRDVS) the composition is skewed to basic and acidic residues. The tract at residues 124 to 182 (REREPDPPDDRDVSDGEDEKPPLPPRSGSTSISAPVGPGSPPAAPETPTTPAAESAPNG) is disordered. Phosphoserine is present on Ser137. Residues 169–180 (ETPTTPAAESAP) are compositionally biased toward low complexity. The residue at position 170 (Thr170) is a Phosphothreonine. Residues Ser246 and Ser358 each carry the phosphoserine modification. Tyr892 carries the phosphotyrosine modification. A Phosphoserine modification is found at Ser896. Residues 903–1123 (GAKSKAPSVS…TFLGEVASGD (221 aa)) are disordered. Positions 944 to 954 (PPPTGRPPAPP) are enriched in pro residues. Residues 950 to 955 (PPAPPR) carry the SH3-binding motif. Basic and acidic residues predominate over residues 957–971 (ASREEPLTPRLKAEG). Thr964 bears the Phosphothreonine mark. The NPXY motif signature appears at 989–992 (NPAY). Tyr992 bears the Phosphotyrosine mark. Pro residues-rich tracts occupy residues 1002 to 1017 (LLPP…PVPP), 1054 to 1065 (LPPPDFPPPPLP), and 1093 to 1110 (GPPP…PGPS). The residue at position 1137 (Ser1137) is a Phosphoserine. Residues 1140-1178 (DYAPAGPGRSVLLPGPLELQPPRGLPSDYGRPLSFPPPR) form a disordered region. Phosphotyrosine occurs at positions 1141 and 1168. One can recognise an SAM domain in the interval 1210–1264 (WLRAIGLERYEEGLVHNGWDDLEFLSDITEEDLEEAGVQDPAHKRLLLDTLQLSK). At Ser1263 the chain carries Phosphoserine.

This sequence belongs to the inositol 1,4,5-trisphosphate 5-phosphatase family. In terms of assembly, interacts with tyrosine phosphorylated form of SHC1. Interacts with EGFR. Upon stimulation by the EGF signaling pathway, it forms a complex with SHC1 and EGFR. Interacts with cytoskeletal protein SORBS3/vinexin, promoting its localization to the periphery of cells. Forms a complex with filamin (FLNA or FLNB), actin, GPIb (GP1BA or GP1BB) that regulates cortical and submembraneous actin. Interacts with c-Met/MET, when c-Met/MET is phosphorylated on 'Tyr-1356'. Interacts with p130Cas/BCAR1. Interacts with CENTD3/ARAP3 via its SAM domain. Interacts with c-Cbl/CBL and CAP/SORBS1. Interacts with activated EPHA2 receptor. Interacts with receptor FCGR2A. Interacts with receptor FCGR2B. Interacts with tyrosine kinase ABL1. Interacts with tyrosine kinase TEC. Interacts with CSF1R. Interacts (via N-terminus) with SH3YL1 (via SH3 domain). Interacts with FCRL6 (tyrosine phosphorylated form). Interacts (via SH2 domain) with tyrosine phosphorylated KLRC1 (via ITIM). Interacts with NEDD9/HEF1. Post-translationally, tyrosine phosphorylated by the members of the SRC family after exposure to a diverse array of extracellular stimuli such as insulin, growth factors such as EGF or PDGF, chemokines, integrin ligands and hypertonic and oxidative stress. May be phosphorylated upon IgG receptor FCGR2B-binding. Phosphorylated at Tyr-992 following cell attachment and spreading. Phosphorylated at Tyr-1168 following EGF signaling pathway stimulation. Phosphorylated at Thr-964 in response to PDGF.

The protein localises to the cytoplasm. The protein resides in the cytosol. Its subcellular location is the membrane. It localises to the cell projection. It is found in the filopodium. The protein localises to the lamellipodium. The protein resides in the basal cell membrane. Its subcellular location is the nucleus. It localises to the nucleus speckle. It is found in the cytoskeleton. The protein localises to the spindle pole. It carries out the reaction a 1,2-diacyl-sn-glycero-3-phospho-(1D-myo-inositol-3,4,5-trisphosphate) + H2O = a 1,2-diacyl-sn-glycero-3-phospho-(1D-myo-inositol-3,4-bisphosphate) + phosphate. It catalyses the reaction 1,2-dioctanoyl-sn-glycero-3-phospho-(1D-myo-inositol-3,4,5-trisphosphate) + H2O = 1,2-dioctanoyl-sn-glycero-3-phospho-(1D-myo-inositol-3,4-bisphosphate) + phosphate. The catalysed reaction is 1,2-dihexadecanoyl-sn-glycero-3-phospho-(1D-myo-inositol-3,4,5-trisphosphate) + H2O = 1,2-dihexadecanoyl-sn-glycero-3-phospho-(1D-myo-inositol-3,4-bisphosphate) + phosphate. Activated upon translocation to the sites of synthesis of PtdIns(3,4,5)P3 in the membrane. Enzymatic activity is enhanced in the presence of phosphatidylserine. In terms of biological role, phosphatidylinositol (PtdIns) phosphatase that specifically hydrolyzes the 5-phosphate of phosphatidylinositol-3,4,5-trisphosphate (PtdIns(3,4,5)P3) to produce PtdIns(3,4)P2, thereby negatively regulating the PI3K (phosphoinositide 3-kinase) pathways. Required for correct mitotic spindle orientation and therefore progression of mitosis. Plays a central role in regulation of PI3K-dependent insulin signaling, although the precise molecular mechanisms and signaling pathways remain unclear. While overexpression reduces both insulin-stimulated MAP kinase and Akt activation, its absence does not affect insulin signaling or GLUT4 trafficking. Confers resistance to dietary obesity. May act by regulating AKT2, but not AKT1, phosphorylation at the plasma membrane. Part of a signaling pathway that regulates actin cytoskeleton remodeling. Required for the maintenance and dynamic remodeling of actin structures as well as in endocytosis, having a major impact on ligand-induced EGFR internalization and degradation. Participates in regulation of cortical and submembraneous actin by hydrolyzing PtdIns(3,4,5)P3 thereby regulating membrane ruffling. Regulates cell adhesion and cell spreading. Required for HGF-mediated lamellipodium formation, cell scattering and spreading. Acts as a negative regulator of EPHA2 receptor endocytosis by inhibiting via PI3K-dependent Rac1 activation. Acts as a regulator of neuritogenesis by regulating PtdIns(3,4,5)P3 level and is required to form an initial protrusive pattern, and later, maintain proper neurite outgrowth. Acts as a negative regulator of the FC-gamma-RIIA receptor (FCGR2A). Mediates signaling from the FC-gamma-RIIB receptor (FCGR2B), playing a central role in terminating signal transduction from activating immune/hematopoietic cell receptor systems. Involved in EGF signaling pathway. Upon stimulation by EGF, it is recruited by EGFR and dephosphorylates PtdIns(3,4,5)P3. Plays a negative role in regulating the PI3K-PKB pathway, possibly by inhibiting PKB activity. Down-regulates Fc-gamma-R-mediated phagocytosis in macrophages independently of INPP5D/SHIP1. In macrophages, down-regulates NF-kappa-B-dependent gene transcription by regulating macrophage colony-stimulating factor (M-CSF)-induced signaling. Plays a role in the localization of AURKA and NEDD9/HEF1 to the basolateral membrane at interphase in polarized cysts, thereby mediates cell cycle homeostasis, cell polarization and cilia assembly. Additionally promotion of cilia growth is also facilitated by hydrolysis of (PtdIns(3,4,5)P3) to PtdIns(3,4)P2. Promotes formation of apical membrane-initiation sites during the initial stages of lumen formation via Rho family-induced actin filament organization and CTNNB1 localization to cell-cell contacts. May also hydrolyze PtdIns(1,3,4,5)P4, and could thus affect the levels of the higher inositol polyphosphates like InsP6. Involved in endochondral ossification. The polypeptide is Phosphatidylinositol 3,4,5-trisphosphate 5-phosphatase 2 (Canis lupus familiaris (Dog)).